The chain runs to 440 residues: GTPase Obg (440 aa).

Positions 5–163 constitute an Obg domain; sequence STFVDQTKIE…RTLRLELKVL (159 aa). The region spanning 164 to 338 is the OBG-type G domain; the sequence is ADVGLVGFPS…LMSRAADLVS (175 aa). GTP-binding positions include 170 to 177, 195 to 199, 217 to 220, 288 to 291, and 319 to 321; these read GFPSVGKS, FTTLK, DLPG, SQMD, and SSV. The Mg(2+) site is built by S177 and T197. The OCT domain maps to 362 to 440; that stretch reads YHRPEKMEFT…IGDFSFEFVQ (79 aa).

This sequence belongs to the TRAFAC class OBG-HflX-like GTPase superfamily. OBG GTPase family. Monomer. Mg(2+) serves as cofactor.

It is found in the cytoplasm. An essential GTPase which binds GTP, GDP and possibly (p)ppGpp with moderate affinity, with high nucleotide exchange rates and a fairly low GTP hydrolysis rate. Plays a role in control of the cell cycle, stress response, ribosome biogenesis and in those bacteria that undergo differentiation, in morphogenesis control. The protein is GTPase Obg of Lactobacillus delbrueckii subsp. bulgaricus (strain ATCC BAA-365 / Lb-18).